Reading from the N-terminus, the 529-residue chain is uncharacterized protein (529 aa).

Residues 354 to 373 (FHVASFPWISWAILGSYIML) form a helical membrane-spanning segment.

The protein resides in the host membrane. This is an uncharacterized protein from Acidianus convivator (ATV).